The following is a 165-amino-acid chain: Large ribosomal subunit protein uL10 (165 aa).

Belongs to the universal ribosomal protein uL10 family. In terms of assembly, part of the ribosomal stalk of the 50S ribosomal subunit. The N-terminus interacts with L11 and the large rRNA to form the base of the stalk. The C-terminus forms an elongated spine to which L12 dimers bind in a sequential fashion forming a multimeric L10(L12)X complex.

Functionally, forms part of the ribosomal stalk, playing a central role in the interaction of the ribosome with GTP-bound translation factors. This chain is Large ribosomal subunit protein uL10, found in Shewanella pealeana (strain ATCC 700345 / ANG-SQ1).